Reading from the N-terminus, the 229-residue chain is Heptaprenylglyceryl phosphate synthase (229 aa).

A sn-glycerol 1-phosphate-binding site is contributed by K12. Mg(2+) contacts are provided by D14 and S40. Residues 159–164 (YLEYSG), G189, and 209–210 (GN) contribute to the sn-glycerol 1-phosphate site.

Belongs to the GGGP/HepGP synthase family. Group I subfamily. Homodimer. The cofactor is Mg(2+).

It catalyses the reaction sn-glycerol 1-phosphate + all-trans-heptaprenyl diphosphate = 3-heptaprenyl-sn-glycero-1-phosphate + diphosphate. The protein operates within membrane lipid metabolism; glycerophospholipid metabolism. In terms of biological role, prenyltransferase that catalyzes in vivo the transfer of the heptaprenyl moiety of heptaprenyl pyrophosphate (HepPP; 35 carbon atoms) to the C3 hydroxyl of sn-glycerol-1-phosphate (G1P), producing heptaprenylglyceryl phosphate (HepGP). This reaction is an ether-bond-formation step in the biosynthesis of archaea-type G1P-based membrane lipids found in Bacillales. This Bacillus cereus (strain G9842) protein is Heptaprenylglyceryl phosphate synthase.